The following is a 238-amino-acid chain: tRNA (guanine-N(7)-)-methyltransferase (238 aa).

S-adenosyl-L-methionine contacts are provided by Glu-68, Glu-93, Asp-120, and Asp-143. Residue Asp-143 is part of the active site. Substrate contacts are provided by residues Lys-147, Asp-179, and 216-219 (TKFE).

Belongs to the class I-like SAM-binding methyltransferase superfamily. TrmB family.

It catalyses the reaction guanosine(46) in tRNA + S-adenosyl-L-methionine = N(7)-methylguanosine(46) in tRNA + S-adenosyl-L-homocysteine. The protein operates within tRNA modification; N(7)-methylguanine-tRNA biosynthesis. Its function is as follows. Catalyzes the formation of N(7)-methylguanine at position 46 (m7G46) in tRNA. This Aliivibrio fischeri (strain MJ11) (Vibrio fischeri) protein is tRNA (guanine-N(7)-)-methyltransferase.